A 1423-amino-acid polypeptide reads, in one-letter code: DNA-directed RNA polymerase subunit beta' (1423 aa).

C71, C73, C86, and C89 together coordinate Zn(2+). The Mg(2+) site is built by D461, D463, and D465. Residues C815, C889, C896, and C899 each contribute to the Zn(2+) site.

Belongs to the RNA polymerase beta' chain family. As to quaternary structure, the RNAP catalytic core consists of 2 alpha, 1 beta, 1 beta' and 1 omega subunit. When a sigma factor is associated with the core the holoenzyme is formed, which can initiate transcription. The cofactor is Mg(2+). Requires Zn(2+) as cofactor.

The enzyme catalyses RNA(n) + a ribonucleoside 5'-triphosphate = RNA(n+1) + diphosphate. Its function is as follows. DNA-dependent RNA polymerase catalyzes the transcription of DNA into RNA using the four ribonucleoside triphosphates as substrates. This chain is DNA-directed RNA polymerase subunit beta', found in Actinobacillus pleuropneumoniae serotype 7 (strain AP76).